The following is a 198-amino-acid chain: NAD(P)H dehydrogenase (quinone) (198 aa).

The Flavodoxin-like domain maps to 4–189 (VLVLYYSMYG…SIARYQGEYV (186 aa)). FMN-binding positions include 10–15 (SMYGHI) and 78–80 (TRF). An NAD(+)-binding site is contributed by Y12. W98 contacts substrate. Residues 113-118 (STGTGG) and H133 contribute to the FMN site.

This sequence belongs to the WrbA family. FMN is required as a cofactor.

It carries out the reaction a quinone + NADH + H(+) = a quinol + NAD(+). It catalyses the reaction a quinone + NADPH + H(+) = a quinol + NADP(+). This is NAD(P)H dehydrogenase (quinone) from Escherichia coli O157:H7.